The following is a 400-amino-acid chain: Large envelope protein (400 aa).

Position 1 is an N-acetylmethionine (Met-1). Disordered stretches follow at residues 1–20 (MGGW…SVPN) and 85–114 (LTPV…PLRD). Gly-2 is lipidated: N-myristoyl glycine; by host. The tract at residues 2–119 (GGWSSKPRKG…PPLRDSHPQA (118 aa)) is pre-S1. The segment at 2–174 (GGWSSKPRKG…SARTGDPVTN (173 aa)) is pre-S. Over 2–181 (GGWSSKPRKG…VTNMENITSG (180 aa)) the chain is Virion surface; in external conformation. Residues 2-253 (GGWSSKPRKG…PGYRWMCLRR (252 aa)) lie on the Intravirion; in internal conformation side of the membrane. Trp-4 carries an N-linked (GlcNAc...) asparagine glycan. Positions 97 to 106 (ANRQSGRQPT) are enriched in polar residues. The pre-S2 stretch occupies residues 120–174 (MQWNSTAFHQALQDPRVRGLYFPAGGSSSGTVNPAPNIASHISSISARTGDPVTN). The chain crosses the membrane as a helical span at residues 182–202 (FLGPLPVLQAGFFLLTRILTI). Topologically, residues 203–253 (PQSLDSWWTSLNFLGGSPVCLGQNSRSPTSNHSPTSCPPICPGYRWMCLRR) are intravirion; in external conformation. Residues 254-274 (FIIFLFILLLCLIFLLVLLDY) form a helical membrane-spanning segment. Over 275 to 348 (QGMLPVCPLI…WASVRFSWLS (74 aa)) the chain is Virion surface. Asn-320 carries an N-linked (GlcNAc...) asparagine; by host glycan. The helical transmembrane segment at 349 to 369 (LLVPFVQWFVGLSPTVWLSAI) threads the bilayer. Residues 370–375 (WMMWYW) lie on the Intravirion side of the membrane. Residues 376 to 398 (GPSLYSIVSSFIPLLPIFFCLWV) form a helical membrane-spanning segment. At 399–400 (YI) the chain is on the virion surface side.

This sequence belongs to the orthohepadnavirus major surface antigen family. As to quaternary structure, in its internal form (Li-HBsAg), interacts with the capsid protein and with the isoform S. Interacts with host chaperone CANX. Associates with host chaperone CANX through its pre-S2 N glycan; this association may be essential for isoform M proper secretion. In terms of assembly, interacts with isoform L. Interacts with the antigens of satellite virus HDV (HDVAgs); this interaction is required for encapsidation of HDV genomic RNA. Isoform M is N-terminally acetylated by host at a ratio of 90%, and N-glycosylated by host at the pre-S2 region. Post-translationally, myristoylated.

The protein resides in the virion membrane. In terms of biological role, the large envelope protein exists in two topological conformations, one which is termed 'external' or Le-HBsAg and the other 'internal' or Li-HBsAg. In its external conformation the protein attaches the virus to cell receptors and thereby initiating infection. This interaction determines the species specificity and liver tropism. This attachment induces virion internalization predominantly through caveolin-mediated endocytosis. The large envelope protein also assures fusion between virion membrane and endosomal membrane. In its internal conformation the protein plays a role in virion morphogenesis and mediates the contact with the nucleocapsid like a matrix protein. Its function is as follows. The middle envelope protein plays an important role in the budding of the virion. It is involved in the induction of budding in a nucleocapsid independent way. In this process the majority of envelope proteins bud to form subviral lipoprotein particles of 22 nm of diameter that do not contain a nucleocapsid. The protein is Large envelope protein of Homo sapiens (Human).